Consider the following 217-residue polypeptide: Adenylate kinase (217 aa).

10-15 lines the ATP pocket; that stretch reads GAGKGT. The interval 30-59 is NMP; that stretch reads STGDMLRAAIREGTELGLKAKSVMESGGLV. AMP-binding positions include T31, R36, 57–59, 85–88, and Q92; these read GLV and GFPR. Positions 122 to 159 are LID; it reads GRRQHPASGRVYHVVYNPPKVEGKDDETGEDLVQRPDD. ATP contacts are provided by residues R123 and 132-133; that span reads VY. Residues R156 and R167 each contribute to the AMP site. R202 contributes to the ATP binding site.

This sequence belongs to the adenylate kinase family. As to quaternary structure, monomer.

The protein resides in the cytoplasm. It carries out the reaction AMP + ATP = 2 ADP. It functions in the pathway purine metabolism; AMP biosynthesis via salvage pathway; AMP from ADP: step 1/1. Catalyzes the reversible transfer of the terminal phosphate group between ATP and AMP. Plays an important role in cellular energy homeostasis and in adenine nucleotide metabolism. The sequence is that of Adenylate kinase from Acinetobacter baumannii (strain AB307-0294).